The primary structure comprises 355 residues: Putative arylamide transporter (355 aa).

6 helical membrane passes run 22-42 (TVLW…YLTH), 44-64 (VFNH…MSAT), 71-91 (RAQQ…GVHA), 92-112 (LLGS…SVAV), 119-139 (VAQG…VLVF), and 150-170 (LFDA…LFPP).

The protein resides in the cell membrane. Its function is as follows. May be involved in the import of arylamide compounds. This is Putative arylamide transporter from Mycobacterium bovis (strain ATCC BAA-935 / AF2122/97).